Consider the following 209-residue polypeptide: Protein GrpE (209 aa).

Positions Met-1–Val-13 are enriched in polar residues. Residues Met-1–Asn-27 are disordered. The segment covering Glu-15–Asn-27 has biased composition (acidic residues).

It belongs to the GrpE family. In terms of assembly, homodimer.

Its subcellular location is the cytoplasm. Functionally, participates actively in the response to hyperosmotic and heat shock by preventing the aggregation of stress-denatured proteins, in association with DnaK and GrpE. It is the nucleotide exchange factor for DnaK and may function as a thermosensor. Unfolded proteins bind initially to DnaJ; upon interaction with the DnaJ-bound protein, DnaK hydrolyzes its bound ATP, resulting in the formation of a stable complex. GrpE releases ADP from DnaK; ATP binding to DnaK triggers the release of the substrate protein, thus completing the reaction cycle. Several rounds of ATP-dependent interactions between DnaJ, DnaK and GrpE are required for fully efficient folding. The sequence is that of Protein GrpE from Shewanella sediminis (strain HAW-EB3).